A 474-amino-acid chain; its full sequence is 1-aminocyclopropane-1-carboxylate synthase 4 (474 aa).

Residues glutamate 47 and tyrosine 85 each coordinate substrate. Lysine 273 is modified (N6-(pyridoxal phosphate)lysine).

This sequence belongs to the class-I pyridoxal-phosphate-dependent aminotransferase family. Homodimer and heterodimer. In vivo, the relevance of heterodimerization with other ACS enzymes is however unsure. Interacts with XBAT32. Interacts (via its C-terminal region) with ETO1 and EOL1. Requires pyridoxal 5'-phosphate as cofactor. In terms of processing, ubiquitinated by XBAT32. Ubiquitination probably leads to its subsequent degradation, thus controlling ethylene production. Expressed in roots, leaves and flowers.

The enzyme catalyses S-adenosyl-L-methionine = 1-aminocyclopropane-1-carboxylate + S-methyl-5'-thioadenosine + H(+). It participates in alkene biosynthesis; ethylene biosynthesis via S-adenosyl-L-methionine; ethylene from S-adenosyl-L-methionine: step 1/2. Functionally, 1-aminocyclopropane-1-carboxylate synthase (ACS) enzymes catalyze the conversion of S-adenosyl-L-methionine (SAM) into 1-aminocyclopropane-1-carboxylate (ACC), a direct precursor of ethylene. The sequence is that of 1-aminocyclopropane-1-carboxylate synthase 4 (ACS4) from Arabidopsis thaliana (Mouse-ear cress).